The primary structure comprises 494 residues: MNNSVDFGGRPFHFIGIGGIGMSALAYVLAKRQLPVSGSDLRPNHITRKLESIGTHIFSRQEASNLEFFGSKVSSTEIELNTQEMFPVGKSTLPQVVCSTAINSNNLEYQAAIELGCPILHRSDVLAALINDYHSVAVAGTHGKTTTSSMIGYMLLEAGLDPTIIVGGEVNAWEGNARLGQSSYLVAEADESDGSLVKHAPEIGIITNIELDHPDHYDTLEEVVDIFQTFAKGCKTLIGSVDCETVRELLRNASGDRQQPTITYSLHQDTEADYTVTNIDYRADGTTALVWEKGKALGVLKLKLLSRHNLSNALAAVAVGRLVGLEFGEIAKGIAGFEGARRRFEFRGEVDGITFIDDYAHHPSEIRATLAAARLQARPGQRVVAIFQPHRYSRTLTFLEEFSESFSHADLVVLTDIYSAGEPNLGLISGENLAEKIAQEHPQVVYQPTLSTVCEYLLKNLRPGDLALFLGAGNLNQAIPEIITTLCAPATATL.

140–146 contacts ATP; it reads GTHGKTT.

The protein belongs to the MurCDEF family.

It is found in the cytoplasm. The enzyme catalyses UDP-N-acetyl-alpha-D-muramate + L-alanine + ATP = UDP-N-acetyl-alpha-D-muramoyl-L-alanine + ADP + phosphate + H(+). It functions in the pathway cell wall biogenesis; peptidoglycan biosynthesis. In terms of biological role, cell wall formation. This Nostoc sp. (strain PCC 7120 / SAG 25.82 / UTEX 2576) protein is UDP-N-acetylmuramate--L-alanine ligase.